The primary structure comprises 451 residues: Phosphoglucosamine mutase (451 aa).

The active-site Phosphoserine intermediate is the S104. Residues S104, D242, D244, and D246 each coordinate Mg(2+). Residue S104 is modified to Phosphoserine.

It belongs to the phosphohexose mutase family. Mg(2+) serves as cofactor. Post-translationally, activated by phosphorylation.

The catalysed reaction is alpha-D-glucosamine 1-phosphate = D-glucosamine 6-phosphate. Functionally, catalyzes the conversion of glucosamine-6-phosphate to glucosamine-1-phosphate. The protein is Phosphoglucosamine mutase of Kocuria rhizophila (strain ATCC 9341 / DSM 348 / NBRC 103217 / DC2201).